Consider the following 127-residue polypeptide: Large ribosomal subunit protein bL17 (127 aa).

The protein belongs to the bacterial ribosomal protein bL17 family. In terms of assembly, part of the 50S ribosomal subunit. Contacts protein L32.

The polypeptide is Large ribosomal subunit protein bL17 (Chromohalobacter salexigens (strain ATCC BAA-138 / DSM 3043 / CIP 106854 / NCIMB 13768 / 1H11)).